Here is a 348-residue protein sequence, read N- to C-terminus: tRNA N6-adenosine threonylcarbamoyltransferase (348 aa).

Residues H120 and H124 each contribute to the Fe cation site. Substrate-binding positions include 143–147, D176, G189, and N282; that span reads LVSGG. A Fe cation-binding site is contributed by D310.

The protein belongs to the KAE1 / TsaD family. Fe(2+) is required as a cofactor.

It localises to the cytoplasm. The enzyme catalyses L-threonylcarbamoyladenylate + adenosine(37) in tRNA = N(6)-L-threonylcarbamoyladenosine(37) in tRNA + AMP + H(+). Its function is as follows. Required for the formation of a threonylcarbamoyl group on adenosine at position 37 (t(6)A37) in tRNAs that read codons beginning with adenine. Is involved in the transfer of the threonylcarbamoyl moiety of threonylcarbamoyl-AMP (TC-AMP) to the N6 group of A37, together with TsaE and TsaB. TsaD likely plays a direct catalytic role in this reaction. The sequence is that of tRNA N6-adenosine threonylcarbamoyltransferase from Paracidovorax citrulli (strain AAC00-1) (Acidovorax citrulli).